Reading from the N-terminus, the 384-residue chain is MDQDAFILKEDSEVEREAPGGRESLSDVIGFLDAVLSSEPTDIGGDRSWLHNTINTPQGPGSAHRAKSEGEGEVSTPSTQDNRSGEESRVSGRTSKPEAEAHAGNLDKQNIHRAFGGRTGTNSVSQDLGDGGDSGILENPPNERGYPRSGIEDENREMAAHPDKRGEDQAEGLPEEVRGSTSLPDEGEGGASNNGRSMEPGSSHSARVTGVLVIPSPELEEAVLRRNKRRPTNSGSKPLTPATVPGTRSPPLNRYNSTGSPPGKPPSTQDEHINSGDTPAVRVKDRKPPIGTRSVSDCPANGRSIHPGLETDSTKKGHRREHIIYERDGYIVDESWCNPVCSRIRIIPRRELCVCKTCPKVCKLCRDDIQCMRPDPFCREIFRS.

Disordered regions lie at residues 1–23 (MDQD…GGRE) and 38–317 (SEPT…TKKG). The segment covering 7–20 (ILKEDSEVEREAPG) has biased composition (basic and acidic residues). Positions 50 to 59 (LHNTINTPQG) are enriched in polar residues. Position 68 is a phosphoserine; by host (serine 68). The span at 83–101 (RSGEESRVSGRTSKPEAEA) shows a compositional bias: basic and acidic residues. Serine 125 carries the post-translational modification Phosphoserine; by host. Residues 150 to 168 (GIEDENREMAAHPDKRGED) show a composition bias toward basic and acidic residues. Residues 191-206 (ASNNGRSMEPGSSHSA) are compositionally biased toward polar residues. Serine 192, serine 249, serine 257, and serine 260 each carry phosphoserine; by host. Zn(2+)-binding residues include histidine 318, cysteine 337, cysteine 341, cysteine 353, cysteine 355, cysteine 358, cysteine 362, and cysteine 365.

The protein belongs to the paramyxoviruses V protein family. Interacts with host IFIH1/MDA5 and DHX58/LGP2. Interacts with host IRF3. Interacts with host RIGI regulatory protein (via CARDs domain) and host TRIM25 (via SPRY domain); these interactions prevent TRIM25-mediated ubiquitination of RIG-I and disrupts downstream RIG-I signaling.

The protein localises to the host cytoplasm. Plays an essential role in the inhibition of host immune response. Prevents the establishment of cellular antiviral state by blocking interferon-alpha/beta (IFN-alpha/beta) production and signaling pathway. Interacts with host IFIH1/MDA5 and DHX58/LGP2 to inhibit the transduction pathway involved in the activation of IFN-beta promoter, thus protecting the virus against cell antiviral state. Also interacts with and inhibits host IRF3. Blocks the type I interferon signaling pathway by disrupting the RIG-I signaling pathway. This chain is Protein V (P/V/C), found in Sendai virus (strain Z) (SeV).